The primary structure comprises 280 residues: Lipase chaperone (280 aa).

Residues 5-22 (ALTIITIALGSLGAVYFL) traverse the membrane as a helical segment.

This sequence belongs to the lipase chaperone family.

Its subcellular location is the cell inner membrane. In terms of biological role, may be involved in the folding of the extracellular lipase during its passage through the periplasm. The polypeptide is Lipase chaperone (lifO) (Vibrio vulnificus (strain CMCP6)).